We begin with the raw amino-acid sequence, 365 residues long: tRNA/tmRNA (uracil-C(5))-methyltransferase (365 aa).

S-adenosyl-L-methionine is bound by residues Q189, Y217, N222, E238, and D298. C323 (nucleophile) is an active-site residue. Catalysis depends on E357, which acts as the Proton acceptor.

This sequence belongs to the class I-like SAM-binding methyltransferase superfamily. RNA M5U methyltransferase family. TrmA subfamily.

The catalysed reaction is uridine(54) in tRNA + S-adenosyl-L-methionine = 5-methyluridine(54) in tRNA + S-adenosyl-L-homocysteine + H(+). It carries out the reaction uridine(341) in tmRNA + S-adenosyl-L-methionine = 5-methyluridine(341) in tmRNA + S-adenosyl-L-homocysteine + H(+). Its function is as follows. Dual-specificity methyltransferase that catalyzes the formation of 5-methyluridine at position 54 (m5U54) in all tRNAs, and that of position 341 (m5U341) in tmRNA (transfer-mRNA). This Shewanella woodyi (strain ATCC 51908 / MS32) protein is tRNA/tmRNA (uracil-C(5))-methyltransferase.